The following is a 389-amino-acid chain: PqqA peptide cyclase (389 aa).

The 216-residue stretch at 19-234 folds into the Radical SAM core domain; that stretch reads VGLPLWLLAE…TNEYRARLEA (216 aa). [4Fe-4S] cluster is bound by residues Cys33, Cys37, and Cys40.

Belongs to the radical SAM superfamily. PqqE family. In terms of assembly, interacts with PqqD. The interaction is necessary for activity of PqqE. [4Fe-4S] cluster is required as a cofactor.

The enzyme catalyses [PQQ precursor protein] + S-adenosyl-L-methionine = E-Y cross-linked-[PQQ precursor protein] + 5'-deoxyadenosine + L-methionine + H(+). The protein operates within cofactor biosynthesis; pyrroloquinoline quinone biosynthesis. Functionally, catalyzes the cross-linking of a glutamate residue and a tyrosine residue in the PqqA protein as part of the biosynthesis of pyrroloquinoline quinone (PQQ). This Pseudomonas syringae pv. syringae (strain B728a) protein is PqqA peptide cyclase.